The following is a 300-amino-acid chain: Cation-efflux pump FieF (300 aa).

A run of 4 helical transmembrane segments spans residues 11–31 (LAAV…VFAW), 40–60 (LASL…LLVV), 81–101 (LAAL…ILTG), and 114–134 (PEVG…LVSF). Positions 45 and 49 each coordinate Zn(2+). Residues H153 and D157 each contribute to the Zn(2+) site. The next 2 membrane-spanning stretches (helical) occupy residues 156–176 (SDLL…KGIT) and 182–202 (FALG…YDAV).

The protein belongs to the cation diffusion facilitator (CDF) transporter (TC 2.A.4) family. FieF subfamily. Homodimer.

It localises to the cell inner membrane. The catalysed reaction is Zn(2+)(in) + H(+)(out) = Zn(2+)(out) + H(+)(in). It carries out the reaction Cd(2+)(in) + H(+)(out) = Cd(2+)(out) + H(+)(in). It catalyses the reaction Fe(2+)(in) + H(+)(out) = Fe(2+)(out) + H(+)(in). Functionally, divalent metal cation transporter which exports Zn(2+), Cd(2+) and possibly Fe(2+). May be involved in zinc and iron detoxification by efflux. The protein is Cation-efflux pump FieF of Pectobacterium carotovorum subsp. carotovorum (strain PC1).